The primary structure comprises 1863 residues: Breast cancer type 1 susceptibility protein homolog (1863 aa).

Methionine 1 carries the post-translational modification N-acetylmethionine. Residues 24 to 65 form an RING-type zinc finger; the sequence is CPICLELIKEPVSTKCDHIFCKFCMLKLLNQKKGPSQCPLCK. Lysine 109 participates in a covalent cross-link: Glycyl lysine isopeptide (Lys-Gly) (interchain with G-Cter in SUMO2). At serine 114 the chain carries Phosphoserine. The disordered stretch occupies residues 231-267; that stretch reads TDVTNTEHHQPSNNDLNTTEKRATERHPEKYQGSSVS. Positions 248–260 are enriched in basic and acidic residues; sequence TTEKRATERHPEK. Lysine 301 participates in a covalent cross-link: Glycyl lysine isopeptide (Lys-Gly) (interchain with G-Cter in SUMO2). The disordered stretch occupies residues 306 to 338; sequence NKSKQPGLARSQHNRWAGSKETCNDRQTPSTEK. Residue lysine 339 forms a Glycyl lysine isopeptide (Lys-Gly) (interchain with G-Cter in SUMO2) linkage. 4 positions are modified to phosphoserine: serine 395, serine 398, serine 423, and serine 434. Residues lysine 443, lysine 459, and lysine 519 each participate in a glycyl lysine isopeptide (Lys-Gly) (interchain with G-Cter in SUMO2) cross-link. Residue serine 551 is modified to Phosphoserine. Glycyl lysine isopeptide (Lys-Gly) (interchain with G-Cter in SUMO2) cross-links involve residues lysine 583 and lysine 654. The tract at residues 650–735 is disordered; that stretch reads IKKKKYNQMP…LPREEKEEKL (86 aa). Phosphoserine occurs at positions 694, 708, and 725. The segment covering 705–716 has biased composition (polar residues); sequence APGSFTNCSNTS. Glycyl lysine isopeptide (Lys-Gly) (interchain with G-Cter in SUMO2) cross-links involve residues lysine 734 and lysine 739. Phosphoserine occurs at positions 753 and 840. Residues lysine 918 and lysine 987 each participate in a glycyl lysine isopeptide (Lys-Gly) (interchain with G-Cter in SUMO2) cross-link. At serine 988 the chain carries Phosphoserine; by CHEK2. A Phosphoserine modification is found at serine 1009. The disordered stretch occupies residues 1045–1066; the sequence is NEVGSSTNEVGSSINEVGSSDE. Lysine 1079 is covalently cross-linked (Glycyl lysine isopeptide (Lys-Gly) (interchain with G-Cter in SUMO2)). Phosphoserine occurs at positions 1143, 1189, 1191, 1211, 1217, 1218, 1280, 1328, 1336, 1342, and 1387. Residues 1181–1216 are disordered; it reads VQRGELSRSPSPFTHTHLAQGYRRGAKKLESSEENL. The interval 1322-1394 is disordered; it reads KQMRHQSESQ…LSSQSDILTT (73 aa). Over residues 1342-1360 the composition is skewed to acidic residues; it reads SDDEERGTDLEENNQEEQG. Polar residues predominate over residues 1373 to 1394; sequence ESETSVSEDCSGLSSQSDILTT. Residue threonine 1394 is modified to Phosphothreonine. The tract at residues 1397–1424 is interaction with PALB2; it reads RDTMQDNLIKLQQEMAELEAVLEQHGSQ. Phosphoserine occurs at positions 1423, 1457, 1524, and 1542. The tract at residues 1440–1504 is disordered; it reads EDLRNPEQST…RSSPSKCPSL (65 aa). Polar residues predominate over residues 1445-1470; the sequence is PEQSTSEKAVLTSQKSSEYPISQNPE. Disordered regions lie at residues 1540-1597 and 1610-1642; these read EESG…PSST and SAQSPAAAQTTNTAGYNAMEESVSREKPELTAS. Over residues 1610 to 1624 the composition is skewed to polar residues; the sequence is SAQSPAAAQTTNTAG. BRCT domains are found at residues 1642 to 1736 and 1756 to 1855; these read STER…DFEV and QDRK…TYLI.

Heterodimer with BARD1. Part of the BRCA1-associated genome surveillance complex (BASC), which contains BRCA1, MSH2, MSH6, MLH1, ATM, BLM, PMS2 and the MRE11-RAD50-NBN protein (MRN) complex. This association could be a dynamic process changing throughout the cell cycle and within subnuclear domains. Component of the BRCA1-A complex, at least composed of BRCA1, BARD1, UIMC1/RAP80, ABRAXAS1, BRCC3/BRCC36, BABAM2 and BABAM1/NBA1. Interacts (via the BRCT domains) with ABRAXAS1 (phosphorylated form); this is important for recruitment to sites of DNA damage. Can form a heterotetramer with two molecules of ABRAXAS1 (phosphorylated form). Component of the BRCA1-RBBP8 complex. Interacts (via the BRCT domains) with RBBP8 ('Ser-327' phosphorylated form); the interaction ubiquitinates RBBP8, regulates CHEK1 activation, and involves RBBP8 in BRCA1-dependent G2/M checkpoint control on DNA damage. Associates with RNA polymerase II holoenzyme. Interacts with SMC1A, NELFB, DCLRE1C, CLSPN. CHEK1, CHEK2, BAP1, BRCC3, UBXN1 and PCLAF. Interacts (via BRCT domains) with BRIP1 (phosphorylated form). Interacts with FANCD2 (ubiquitinated form). Interacts with H2AX (phosphorylated on 'Ser-140'). Interacts (via the BRCT domains) with ACACA (phosphorylated form); the interaction prevents dephosphorylation of ACACA. Part of a BRCA complex containing BRCA1, BRCA2 and PALB2. Interacts directly with PALB2; the interaction is essential for its function in HRR. Interacts directly with BRCA2; the interaction occurs only in the presence of PALB2 which serves as the bridging protein. Interacts (via the BRCT domains) with LMO4; the interaction represses the transcriptional activity of BRCA1. Interacts (via the BRCT domains) with CCAR2 (via N-terminus); the interaction represses the transcriptional activator activity of BRCA1. Interacts with EXD2. Interacts (via C-terminus) with DHX9; this interaction is direct and links BRCA1 to the RNA polymerase II holoenzyme. Interacts with DNA helicase ZGRF1; the interaction is increased following DNA damage induction. Phosphorylated in response to IR, UV, and various stimuli that cause checkpoint activation, probably by ATM or ATR. Phosphorylation at Ser-988 by CHEK2 regulates mitotic spindle assembly. Phosphorylation by AURKA regulates centrosomal microtubule nucleation. In terms of processing, autoubiquitinated, undergoes 'Lys-6'-linked polyubiquitination. 'Lys-6'-linked polyubiquitination does not promote degradation.

Its subcellular location is the nucleus. It localises to the chromosome. The protein localises to the cytoplasm. It carries out the reaction S-ubiquitinyl-[E2 ubiquitin-conjugating enzyme]-L-cysteine + [acceptor protein]-L-lysine = [E2 ubiquitin-conjugating enzyme]-L-cysteine + N(6)-ubiquitinyl-[acceptor protein]-L-lysine.. It functions in the pathway protein modification; protein ubiquitination. Functionally, E3 ubiquitin-protein ligase that specifically mediates the formation of 'Lys-6'-linked polyubiquitin chains and plays a central role in DNA repair by facilitating cellular responses to DNA damage. It is unclear whether it also mediates the formation of other types of polyubiquitin chains. The BRCA1-BARD1 heterodimer coordinates a diverse range of cellular pathways such as DNA damage repair, ubiquitination and transcriptional regulation to maintain genomic stability. Regulates centrosomal microtubule nucleation. Required for appropriate cell cycle arrests after ionizing irradiation in both the S-phase and the G2 phase of the cell cycle. Required for FANCD2 targeting to sites of DNA damage. Inhibits lipid synthesis by binding to inactive phosphorylated ACACA and preventing its dephosphorylation. Contributes to homologous recombination repair (HRR) via its direct interaction with PALB2, fine-tunes recombinational repair partly through its modulatory role in the PALB2-dependent loading of BRCA2-RAD51 repair machinery at DNA breaks. Component of the BRCA1-RBBP8 complex which regulates CHEK1 activation and controls cell cycle G2/M checkpoints on DNA damage via BRCA1-mediated ubiquitination of RBBP8. Acts as a transcriptional activator. The sequence is that of Breast cancer type 1 susceptibility protein homolog (BRCA1) from Pongo pygmaeus (Bornean orangutan).